Here is a 255-residue protein sequence, read N- to C-terminus: Protein patched homolog 2 (255 aa).

At 1–197 (SLLQGGSAYL…LNDIMKSFSD (197 aa)) the chain is on the extracellular side. 2 N-linked (GlcNAc...) asparagine glycosylation sites follow: asparagine 147 and asparagine 175. The chain crosses the membrane as a helical span at residues 198–218 (VSVIRVAGGYLLMLAYACVTM). Residues 199–255 (SVIRVAGGYLLMLAYACVTMLRWDCTKSQGAVGLAGVLLVALSVASGLGLCSLLGIS) form the SSD domain. The Cytoplasmic portion of the chain corresponds to 219–227 (LRWDCTKSQ). The helical transmembrane segment at 228–248 (GAVGLAGVLLVALSVASGLGL) threads the bilayer. Over 249–255 (CSLLGIS) the chain is Extracellular.

This sequence belongs to the patched family. In terms of tissue distribution, in the eye, detected in neural retina, iris, retinal pigment epithelium, but not in lens.

It localises to the membrane. May act as a receptor for sonic hedgehog (SHH). This chain is Protein patched homolog 2 (PTC2), found in Cynops pyrrhogaster (Japanese fire-bellied newt).